The following is a 166-amino-acid chain: Phosphopantetheine adenylyltransferase (166 aa).

Threonine 10 contributes to the substrate binding site. Residues 10-11 and histidine 18 contribute to the ATP site; that span reads TF. Substrate contacts are provided by lysine 42, leucine 74, and arginine 88. Residues 89 to 91, glutamate 99, and 124 to 130 contribute to the ATP site; these read GLR and NSFISSS.

The protein belongs to the bacterial CoaD family. In terms of assembly, homohexamer. It depends on Mg(2+) as a cofactor.

The protein localises to the cytoplasm. It catalyses the reaction (R)-4'-phosphopantetheine + ATP + H(+) = 3'-dephospho-CoA + diphosphate. It functions in the pathway cofactor biosynthesis; coenzyme A biosynthesis; CoA from (R)-pantothenate: step 4/5. In terms of biological role, reversibly transfers an adenylyl group from ATP to 4'-phosphopantetheine, yielding dephospho-CoA (dPCoA) and pyrophosphate. This is Phosphopantetheine adenylyltransferase from Idiomarina loihiensis (strain ATCC BAA-735 / DSM 15497 / L2-TR).